A 338-amino-acid polypeptide reads, in one-letter code: DNA-directed RNA polymerase subunit alpha (338 aa).

Residues 1–10 (MIQKNWQTLE) show a composition bias toward polar residues. The tract at residues 1–24 (MIQKNWQTLEKPSKLDITPGSDPK) is disordered. Residues 1-234 (MIQKNWQTLE…DQLQMFINFE (234 aa)) are alpha N-terminal domain (alpha-NTD). The tract at residues 250–338 (FNKNLLRKVD…DLAKRLEEPY (89 aa)) is alpha C-terminal domain (alpha-CTD).

The protein belongs to the RNA polymerase alpha chain family. In terms of assembly, homodimer. The RNAP catalytic core consists of 2 alpha, 1 beta, 1 beta' and 1 omega subunit. When a sigma factor is associated with the core the holoenzyme is formed, which can initiate transcription.

It carries out the reaction RNA(n) + a ribonucleoside 5'-triphosphate = RNA(n+1) + diphosphate. Functionally, DNA-dependent RNA polymerase catalyzes the transcription of DNA into RNA using the four ribonucleoside triphosphates as substrates. This is DNA-directed RNA polymerase subunit alpha from Rhodospirillum centenum (strain ATCC 51521 / SW).